We begin with the raw amino-acid sequence, 638 residues long: LIM domain kinase 2 (638 aa).

LIM zinc-binding domains lie at 12–63 and 72–124; these read CRGC…CHKD and CHGC…CGKC. The PDZ domain maps to 152–239; that stretch reads LISMPATTEC…TLQLLIEHDP (88 aa). Threonine 210 carries the phosphothreonine modification. The tract at residues 255 to 304 is disordered; sequence PHMQSTGHTLMLSTLDTKENQEGTLRRRSLRRSNSISKSPGPSSPKEPLL. Residues 257 to 269 show a composition bias toward polar residues; the sequence is MQSTGHTLMLSTL. Positions 270-279 are enriched in basic and acidic residues; sequence DTKENQEGTL. The segment covering 286–304 has biased composition (low complexity); that stretch reads RSNSISKSPGPSSPKEPLL. Serine 293 and serine 298 each carry phosphoserine. The Protein kinase domain maps to 331 to 608; it reads LIHGEVLGKG…DSFEALSLFL (278 aa). Residues 337-345 and lysine 360 each bind ATP; that span reads LGKGFFGQA. The active site involves aspartate 451. A Phosphothreonine; by ROCK1 and CDC42BP modification is found at threonine 505.

The protein belongs to the protein kinase superfamily. TKL Ser/Thr protein kinase family. In terms of assembly, binds ROCK1 and MARF1. Interacts with NISCH. Phosphorylated on serine and/or threonine residues by ROCK1. As to expression, specifically expressed in the testes.

It localises to the cytoplasm. The protein localises to the cytoskeleton. The protein resides in the spindle. It is found in the microtubule organizing center. Its subcellular location is the centrosome. It localises to the nucleus. The protein localises to the perinuclear region. The catalysed reaction is L-seryl-[protein] + ATP = O-phospho-L-seryl-[protein] + ADP + H(+). The enzyme catalyses L-threonyl-[protein] + ATP = O-phospho-L-threonyl-[protein] + ADP + H(+). Functionally, serine/threonine-protein kinase that plays an essential role in the regulation of actin filament dynamics. Acts downstream of several Rho family GTPase signal transduction pathways. Involved in astral microtubule organization and mitotic spindle orientation during early stages of mitosis by mediating phosphorylation of TPPP. Displays serine/threonine-specific phosphorylation of myelin basic protein and histone (MBP) in vitro. Suppresses ciliogenesis via multiple pathways; phosphorylation of CFL1, suppression of directional trafficking of ciliary vesicles to the ciliary base, and by facilitating YAP1 nuclear localization where it acts as a transcriptional corepressor of the TEAD4 target genes AURKA and PLK1. In Mus musculus (Mouse), this protein is LIM domain kinase 2 (Limk2).